A 295-amino-acid chain; its full sequence is sn-glycerol-3-phosphate transport system permease protein UgpA (295 aa).

Over 1–11 (MSSFRPVFRSR) the chain is Cytoplasmic. The helical transmembrane segment at 12–32 (WLPYLLVAPQLVITVIFFIWP) threads the bilayer. The Periplasmic portion of the chain corresponds to 33 to 80 (AGEALWYSLQSVDPFGFSSQFVGLENFVALFHDSYYLDAFWTTIKFSA). An ABC transmembrane type-1 domain is found at 76 to 284 (IKFSALVTFS…FLVIILTVVQ (209 aa)). A helical transmembrane segment spans residues 81 to 101 (LVTFSGLLVSLFFAALVDYVV). Topologically, residues 102-109 (RGSRFYQT) are cytoplasmic. A helical transmembrane segment spans residues 110-130 (LMLLPYAVAPAVAAVLWIFLF). The Periplasmic segment spans residues 131 to 157 (NPGRGLITHFLGEFGYDWNHAQNSGQA). A helical transmembrane segment spans residues 158 to 178 (MFLVVFASVWKQISYNFLFFF). Over 179 to 207 (AALQSIPRSLVEAAAIDGAGPIRRFFRLS) the chain is Cytoplasmic. A helical transmembrane segment spans residues 208–228 (LPLIAPVSFFLLVVNLVYAFF). The Periplasmic portion of the chain corresponds to 229 to 262 (DTFPVIDAATAGGPVQATTTLIYKIYREGFTGLD). Residues 263 to 283 (LSASAAQSVVLMFLVIILTVV) traverse the membrane as a helical segment. At 284-295 (QFRYVESKVRYQ) the chain is on the cytoplasmic side.

The protein belongs to the binding-protein-dependent transport system permease family. UgpAE subfamily. In terms of assembly, the complex is composed of two ATP-binding proteins (UgpC), two transmembrane proteins (UgpA and UgpE) and a solute-binding protein (UgpB).

It is found in the cell inner membrane. Its function is as follows. Part of the ABC transporter complex UgpBAEC involved in sn-glycerol-3-phosphate (G3P) import. Probably responsible for the translocation of the substrate across the membrane. The polypeptide is sn-glycerol-3-phosphate transport system permease protein UgpA (ugpA) (Salmonella choleraesuis (strain SC-B67)).